A 437-amino-acid polypeptide reads, in one-letter code: Chaperone SurA (437 aa).

The N-terminal stretch at 1-27 is a signal peptide; that stretch reads MHNHVFKTIARHGLIALFFFFSISAMA. 2 consecutive PpiC domains span residues 179-280 and 290-388; these read QDEF…KLLN and VDQT…QVLE.

The protein resides in the periplasm. It catalyses the reaction [protein]-peptidylproline (omega=180) = [protein]-peptidylproline (omega=0). Chaperone involved in the correct folding and assembly of outer membrane proteins. Recognizes specific patterns of aromatic residues and the orientation of their side chains, which are found more frequently in integral outer membrane proteins. May act in both early periplasmic and late outer membrane-associated steps of protein maturation. This chain is Chaperone SurA, found in Methylobacillus flagellatus (strain ATCC 51484 / DSM 6875 / VKM B-1610 / KT).